Reading from the N-terminus, the 392-residue chain is Methylthioribose-1-phosphate isomerase (392 aa).

Catalysis depends on Asp253, which acts as the Proton donor.

The protein belongs to the eIF-2B alpha/beta/delta subunits family. MtnA subfamily.

The protein localises to the cytoplasm. The protein resides in the nucleus. The catalysed reaction is 5-(methylsulfanyl)-alpha-D-ribose 1-phosphate = 5-(methylsulfanyl)-D-ribulose 1-phosphate. The protein operates within amino-acid biosynthesis; L-methionine biosynthesis via salvage pathway; L-methionine from S-methyl-5-thio-alpha-D-ribose 1-phosphate: step 1/6. Its function is as follows. Catalyzes the interconversion of methylthioribose-1-phosphate (MTR-1-P) into methylthioribulose-1-phosphate (MTRu-1-P). In Pyrenophora tritici-repentis (strain Pt-1C-BFP) (Wheat tan spot fungus), this protein is Methylthioribose-1-phosphate isomerase (mri1).